Reading from the N-terminus, the 122-residue chain is Large ribosomal subunit protein uL14 (122 aa).

It belongs to the universal ribosomal protein uL14 family. Part of the 50S ribosomal subunit. Forms a cluster with proteins L3 and L19. In the 70S ribosome, L14 and L19 interact and together make contacts with the 16S rRNA in bridges B5 and B8.

Functionally, binds to 23S rRNA. Forms part of two intersubunit bridges in the 70S ribosome. This chain is Large ribosomal subunit protein uL14, found in Pelodictyon phaeoclathratiforme (strain DSM 5477 / BU-1).